An 821-amino-acid polypeptide reads, in one-letter code: Calpain-3 (821 aa).

Residues 1 to 37 (MPTVISPTVAPRTGAEPRSPGPVPHPAQGKTTEAGGG) form a disordered region. The Calpain catalytic domain maps to 74 to 417 (LYLDPEFPPD…FTKLEICNLT (344 aa)). Residues cysteine 129, histidine 334, and asparagine 358 contribute to the active site. The interval 418-586 (ADALESDKLQ…KRNLSEEAEN (169 aa)) is domain III. Positions 587–649 (TISVDRPVKK…RPGHTDQESE (63 aa)) are linker. Residues 603-651 (IFVSDRANSNKELGVDQEAEEGKDKTGPDKQGESPQPRPGHTDQESEEQ) are disordered. Basic and acidic residues predominate over residues 622–634 (EEGKDKTGPDKQG). EF-hand domains lie at 649–683 (EEQQ…VVNK), 692–725 (FTLE…KKIK), 722–757 (KKIK…AGFH), and 787–821 (VRLE…TMYA). Residues 650–820 (EQQQFRNIFR…VLEWLQLTMY (171 aa)) are domain IV. Ca(2+) is bound by residues alanine 662, aspartate 665, glutamate 667, glutamate 672, aspartate 705, aspartate 707, serine 709, arginine 711, glutamate 716, aspartate 735, aspartate 737, serine 739, threonine 741, glutamate 746, aspartate 800, aspartate 802, aspartate 804, and isoleucine 806.

It belongs to the peptidase C2 family. In terms of assembly, homodimer; via EF-hand domain 4. Interacts with TTN/titin. Interacts with CMYA5; this interaction, which results in CMYA5 proteolysis, may protect CAPN3 from autolysis. Interacts with SIMC1. Interacts with UTP25; the interaction is required for CAPN3 translocation to the nucleolus. In terms of tissue distribution, skeletal muscle.

The protein resides in the cytoplasm. It is found in the nucleus. It localises to the nucleolus. It catalyses the reaction Broad endopeptidase activity.. Activated by micromolar concentrations of calcium and inhibited by calpastatin. Calcium-regulated non-lysosomal thiol-protease. Proteolytically cleaves CTBP1 at 'His-399'. Mediates, with UTP25, the proteasome-independent degradation of p53/TP53. The sequence is that of Calpain-3 (Capn3) from Rattus norvegicus (Rat).